The chain runs to 354 residues: Guanine nucleotide-binding protein G(o) subunit alpha (354 aa).

Residue Gly-2 is the site of N-myristoyl glycine attachment. Cys-3 carries S-palmitoyl cysteine lipidation. Residues 32–354 enclose the G-alpha domain; sequence KDVKLLLLGA…ANNLRGCGLY (323 aa). A G1 motif region spans residues 35–48; the sequence is KLLLLGAGESGKST. Residues Glu-43, Lys-46, Ser-47, Thr-48, Ser-152, Leu-176, Arg-177, Thr-178, and Arg-179 each coordinate GTP. Ser-47 contributes to the Mg(2+) binding site. Positions 174 to 182 are G2 motif; that stretch reads DILRTRVKT. Mg(2+) is bound at residue Thr-182. The G3 motif stretch occupies residues 197-206; it reads FRLFDVGGQR. A 5-glutamyl histamine modification is found at Gln-205. Residues 266–273 are G4 motif; the sequence is ILFLNKKD. GTP contacts are provided by Asn-270, Asp-273, and Cys-325. A G5 motif region spans residues 324 to 329; it reads TCATDT. Residue Cys-351 is the site of S-palmitoyl cysteine attachment.

This sequence belongs to the G-alpha family. G(i/o/t/z) subfamily. In terms of assembly, g proteins are composed of 3 units; alpha, beta and gamma. The alpha chain contains the guanine nucleotide binding site. Forms a complex with GNB1 and GNG3. Interacts with RGS14. Interacts with RGS16. Interacts with RGS19. Interacts (when palmitoylated) with ADGRG3. In terms of processing, histaminylated at Gln-205 residues by TGM2.

The protein localises to the cell membrane. It is found in the membrane. It carries out the reaction GTP + H2O = GDP + phosphate + H(+). The GTPase activity is promoted by GTPAse activators, such as RGS14, RGS16 and RGS19. Functionally, guanine nucleotide-binding proteins (G proteins) function as transducers downstream of G protein-coupled receptors (GPCRs) in numerous signaling cascades. The alpha chain contains the guanine nucleotide binding site and alternates between an active, GTP-bound state and an inactive, GDP-bound state. Signaling by an activated GPCR promotes GDP release and GTP binding. The alpha subunit has a low GTPase activity that converts bound GTP to GDP, thereby terminating the signal. Both GDP release and GTP hydrolysis are modulated by numerous regulatory proteins. Signaling is mediated via effector proteins, such as adenylate cyclase. Inhibits adenylate cyclase activity, leading to decreased intracellular cAMP levels. In Mus musculus (Mouse), this protein is Guanine nucleotide-binding protein G(o) subunit alpha (Gnao1).